The primary structure comprises 93 residues: Small ribosomal subunit protein bS18 (93 aa).

Belongs to the bacterial ribosomal protein bS18 family. Part of the 30S ribosomal subunit. Forms a tight heterodimer with protein bS6.

Functionally, binds as a heterodimer with protein bS6 to the central domain of the 16S rRNA, where it helps stabilize the platform of the 30S subunit. This is Small ribosomal subunit protein bS18 from Variovorax paradoxus (strain S110).